Here is a 654-residue protein sequence, read N- to C-terminus: Threonine--tRNA ligase (654 aa).

The TGS domain maps to 1-63 (MAQISLTFPD…DADASIAIHT (63 aa)). Residues 247 to 544 (DHRKLGREMN…LIENFAGKLP (298 aa)) are catalytic. Residues C344, H395, and H521 each contribute to the Zn(2+) site.

This sequence belongs to the class-II aminoacyl-tRNA synthetase family. As to quaternary structure, homodimer. Requires Zn(2+) as cofactor.

The protein resides in the cytoplasm. The enzyme catalyses tRNA(Thr) + L-threonine + ATP = L-threonyl-tRNA(Thr) + AMP + diphosphate + H(+). In terms of biological role, catalyzes the attachment of threonine to tRNA(Thr) in a two-step reaction: L-threonine is first activated by ATP to form Thr-AMP and then transferred to the acceptor end of tRNA(Thr). Also edits incorrectly charged L-seryl-tRNA(Thr). This Dinoroseobacter shibae (strain DSM 16493 / NCIMB 14021 / DFL 12) protein is Threonine--tRNA ligase.